The sequence spans 289 residues: Probable branched-chain-amino-acid aminotransferase (289 aa).

Position 154 is an N6-(pyridoxal phosphate)lysine (Lys154).

Belongs to the class-IV pyridoxal-phosphate-dependent aminotransferase family. Pyridoxal 5'-phosphate is required as a cofactor.

It catalyses the reaction L-leucine + 2-oxoglutarate = 4-methyl-2-oxopentanoate + L-glutamate. The enzyme catalyses L-isoleucine + 2-oxoglutarate = (S)-3-methyl-2-oxopentanoate + L-glutamate. It carries out the reaction L-valine + 2-oxoglutarate = 3-methyl-2-oxobutanoate + L-glutamate. Its pathway is amino-acid biosynthesis; L-isoleucine biosynthesis; L-isoleucine from 2-oxobutanoate: step 4/4. It participates in amino-acid biosynthesis; L-leucine biosynthesis; L-leucine from 3-methyl-2-oxobutanoate: step 4/4. It functions in the pathway amino-acid biosynthesis; L-valine biosynthesis; L-valine from pyruvate: step 4/4. Acts on leucine, isoleucine and valine. This is Probable branched-chain-amino-acid aminotransferase (ilvE) from Rickettsia bellii (strain RML369-C).